Reading from the N-terminus, the 154-residue chain is MKCPFCGAEDTAVADTRLNDEADVVRRRRKCNACDKRFTTYERAEIQLPQVVKKNGLRTEFSRAKLRASLELALRKRPVSIESVDAAVADIEERLLSAGEREVTTQQLGELVMRELKKLDKVAYIRFASVYRNFEDVDAFSRAIREVSPAAKKK.

A zinc finger lies at 3–34; the sequence is CPFCGAEDTAVADTRLNDEADVVRRRRKCNAC. The ATP-cone domain maps to 49-139; sequence PQVVKKNGLR…VYRNFEDVDA (91 aa).

The protein belongs to the NrdR family. Zn(2+) serves as cofactor.

In terms of biological role, negatively regulates transcription of bacterial ribonucleotide reductase nrd genes and operons by binding to NrdR-boxes. In Dechloromonas aromatica (strain RCB), this protein is Transcriptional repressor NrdR.